A 468-amino-acid polypeptide reads, in one-letter code: Glutamate--tRNA ligase (468 aa).

The short motif at 8-18 (PSPTGFLHVGG) is the 'HIGH' region element. Cysteine 97, cysteine 99, cysteine 124, and aspartate 126 together coordinate Zn(2+). Residues 236–240 (KLSKR) carry the 'KMSKS' region motif. Residue lysine 239 coordinates ATP.

Belongs to the class-I aminoacyl-tRNA synthetase family. Glutamate--tRNA ligase type 1 subfamily. In terms of assembly, monomer. Zn(2+) is required as a cofactor.

The protein resides in the cytoplasm. It catalyses the reaction tRNA(Glu) + L-glutamate + ATP = L-glutamyl-tRNA(Glu) + AMP + diphosphate. Functionally, catalyzes the attachment of glutamate to tRNA(Glu) in a two-step reaction: glutamate is first activated by ATP to form Glu-AMP and then transferred to the acceptor end of tRNA(Glu). This Francisella tularensis subsp. holarctica (strain FTNF002-00 / FTA) protein is Glutamate--tRNA ligase.